We begin with the raw amino-acid sequence, 276 residues long: UPF0276 protein PA4106 (276 aa).

It belongs to the UPF0276 family.

This chain is UPF0276 protein PA4106, found in Pseudomonas aeruginosa (strain ATCC 15692 / DSM 22644 / CIP 104116 / JCM 14847 / LMG 12228 / 1C / PRS 101 / PAO1).